The sequence spans 230 residues: Phosphoribosylformylglycinamidine synthase subunit PurQ (230 aa).

Positions 3 to 230 constitute a Glutamine amidotransferase type-1 domain; that stretch reads SAIIVFPGTN…LFQSIVESLS (228 aa). Cysteine 87 acts as the Nucleophile in catalysis. Residues histidine 204 and glutamate 206 contribute to the active site.

In terms of assembly, part of the FGAM synthase complex composed of 1 PurL, 1 PurQ and 2 PurS subunits.

The protein resides in the cytoplasm. It carries out the reaction N(2)-formyl-N(1)-(5-phospho-beta-D-ribosyl)glycinamide + L-glutamine + ATP + H2O = 2-formamido-N(1)-(5-O-phospho-beta-D-ribosyl)acetamidine + L-glutamate + ADP + phosphate + H(+). The catalysed reaction is L-glutamine + H2O = L-glutamate + NH4(+). It participates in purine metabolism; IMP biosynthesis via de novo pathway; 5-amino-1-(5-phospho-D-ribosyl)imidazole from N(2)-formyl-N(1)-(5-phospho-D-ribosyl)glycinamide: step 1/2. Part of the phosphoribosylformylglycinamidine synthase complex involved in the purines biosynthetic pathway. Catalyzes the ATP-dependent conversion of formylglycinamide ribonucleotide (FGAR) and glutamine to yield formylglycinamidine ribonucleotide (FGAM) and glutamate. The FGAM synthase complex is composed of three subunits. PurQ produces an ammonia molecule by converting glutamine to glutamate. PurL transfers the ammonia molecule to FGAR to form FGAM in an ATP-dependent manner. PurS interacts with PurQ and PurL and is thought to assist in the transfer of the ammonia molecule from PurQ to PurL. This is Phosphoribosylformylglycinamidine synthase subunit PurQ from Rhodospirillum rubrum (strain ATCC 11170 / ATH 1.1.1 / DSM 467 / LMG 4362 / NCIMB 8255 / S1).